Reading from the N-terminus, the 1130-residue chain is Tyrosine-protein kinase ABL1 (1130 aa).

The interval 1–60 is CAP; sequence MLEICLKLVGCKSKKGLSSSSSCYLEEALQRPVASDFEPQGLSEAARWNSKENLLAGPSE. L2 carries the N-myristoyl glycine lipid modification. The residue at position 50 (S50) is a Phosphoserine. The region spanning 61 to 121 is the SH3 domain; it reads NDPNLFVALY…PSNYITPVNS (61 aa). At Y70 the chain carries Phosphotyrosine; by autocatalysis. Residues Y115, Y128, Y139, Y172, Y185, and Y215 each carry the phosphotyrosine modification. Residues 127 to 217 enclose the SH2 domain; that stretch reads WYHGPVSRNA…GLITTLHYPA (91 aa). Phosphotyrosine; by autocatalysis is present on Y226. S229 carries the post-translational modification Phosphoserine. A Protein kinase domain is found at 242–493; it reads ITMKHKLGGG…PSFAEIHQAF (252 aa). ATP is bound at residue 248 to 256; the sequence is LGGGQYGEV. Phosphotyrosine is present on residues Y253 and Y257. ATP is bound by residues K271 and 316–322; that span reads EFMTYGN. Catalysis depends on D363, which acts as the Proton acceptor. The short motif at 381 to 405 is the Kinase activation loop element; it reads DFGLSRLMTGDTYTAHAGAKFPIKW. Y393 carries the phosphotyrosine; by autocatalysis and SRC-type Tyr-kinases modification. At Y413 the chain carries Phosphotyrosine. S446, S559, and S569 each carry phosphoserine. The tract at residues 518-996 is disordered; the sequence is AVSTLLQAPE…SASSALAGDQ (479 aa). Residues 537-566 show a composition bias toward basic and acidic residues; it reads RAAEHRDTTDVPEMPHSKGQGESDPLDHEP. The span at 586 to 597 shows a compositional bias: basic and acidic residues; the sequence is EDERLLPKDKKT. Residues 605-609 carry the Nuclear localization signal 1 motif; sequence KKKKK. S618 and S619 each carry phosphoserine; by PAK2. S620, S659, and S683 each carry phosphoserine. Basic and acidic residues predominate over residues 620-640; sequence SFREMDGQPERRGAGEEEGRD. The segment covering 689 to 698 has biased composition (polar residues); sequence KSSTLTSSRL. The Nuclear localization signal 2 motif lies at 709-715; the sequence is SSKRFLR. At K711 the chain carries N6-acetyllysine; by EP300. A Phosphoserine modification is found at S718. Residues T735 and T751 each carry the phosphothreonine modification. Positions 740–752 are enriched in polar residues; sequence LQSTGRQFDSSTF. Over residues 755–774 the composition is skewed to basic and acidic residues; the sequence is HKSEKPALPRKRAGENRSDQ. The Nuclear localization signal 3 motif lies at 762-769; the sequence is LPRKRAGE. The residue at position 781 (T781) is a Phosphothreonine. Basic and acidic residues predominate over residues 788–802; it reads KKNEEAADEVFKDIM. Phosphothreonine occurs at positions 814, 823, 844, and 852. S855 carries the post-translational modification Phosphoserine. Residues 869–968 form a DNA-binding region; the sequence is PAEESRVRRH…VLPATPKPQS (100 aa). The span at 881–891 shows a compositional bias: basic and acidic residues; sequence SSESPGRDKGK. The segment covering 905 to 915 has biased composition (low complexity); sequence ASAGKAGGKPS. S917 carries the post-translational modification Phosphoserine. The tract at residues 953 to 1130 is F-actin-binding; that stretch reads EGLKKPVLPA…VKEISDIVQR (178 aa). Positions 965 to 975 are enriched in polar residues; it reads KPQSAKPSGTP. S977 carries the post-translational modification Phosphoserine. The segment covering 984-993 has biased composition (low complexity); sequence TLPSASSALA. A Nuclear export signal motif is present at residues 1090–1100; sequence LENNLRELQIC.

It belongs to the protein kinase superfamily. Tyr protein kinase family. ABL subfamily. In terms of assembly, interacts with SORBS1 following insulin stimulation. Found in a trimolecular complex containing CDK5 and CABLES1. Interacts with CABLES1 and PSTPIP1. Interacts with ZDHHC16, ITGB1 and HCK. Interacts with STX17; probably phosphorylates STX17. Interacts with INPPL1/SHIP2. Interacts with the 14-3-3 proteins, YWHAB, YWHAE, YWHAG, YWHAH, SFN and YWHAZ; the interaction with 14-3-3 proteins requires phosphorylation on Thr-735 and, sequesters ABL1 into the cytoplasm. Interacts with ABI1, ABI2, BCR, CRK, FGR, FYN, HCK, LYN, PSMA7 RAD9A, RAD51, RAD52, TP73 and WASF3. A complex made of ABL1, CTTN and MYLK regulates cortical actin-based cytoskeletal rearrangement critical to sphingosine 1-phosphate (S1P)-mediated endothelial cell (EC) barrier enhancement. Interacts (via SH3 domain) with CASP9; the interaction is direct and increases in the response of cells to genotoxic stress and ABL1/c-Abl activation. Found in a complex with ABL1, ABL2, CRK and UNC119; leading to the inhibition of CRK phosphorylation by ABL kinases. Interacts with TBX21. Interacts with NEDD9/HEF1; interaction is induced by CXCL12 promotion of ABL-mediated phosphorylation of NEDD9/HEF1. Mg(2+) is required as a cofactor. Post-translationally, acetylated at Lys-711 by EP300 which promotes the cytoplasmic translocation. Phosphorylation at Tyr-70 by members of the SRC family of kinases disrupts SH3 domain-based autoinhibitory interactions and intermolecular associations, such as that with ABI1, and also enhances kinase activity. Phosphorylation at Tyr-226 and Tyr-393 correlate with increased activity. DNA damage-induced activation of ABL1 requires the function of ATM and Ser-446 phosphorylation. Phosphorylation at Ser-569 has been attributed to a CDC2-associated kinase and is coupled to cell division. Phosphorylation at Ser-618 and Ser-619 by PAK2 increases binding to CRK and reduces binding to ABI1. Phosphorylation on Thr-735 is required for binding 14-3-3 proteins for cytoplasmic translocation. Phosphorylated by PRKDC. In terms of processing, polyubiquitinated. Polyubiquitination of ABL1 leads to degradation. In terms of tissue distribution, widely expressed.

It localises to the cytoplasm. Its subcellular location is the cytoskeleton. The protein localises to the nucleus. It is found in the mitochondrion. The protein resides in the nucleus membrane. It catalyses the reaction L-tyrosyl-[protein] + ATP = O-phospho-L-tyrosyl-[protein] + ADP + H(+). With respect to regulation, stabilized in the inactive form by an association between the SH3 domain and the SH2-TK linker region, interactions of the N-terminal cap, and contributions from an N-terminal myristoyl group and phospholipids. Activated by autophosphorylation as well as by SRC-family kinase-mediated phosphorylation. Activated by RIN1 binding to the SH2 and SH3 domains. Also stimulated by cell death inducers and DNA-damage. Phosphatidylinositol 4,5-bisphosphate (PIP2), a highly abundant phosphoinositide known to regulate cytoskeletal and membrane proteins, also inhibits the tyrosine kinase activity. Activated by 5-(1,3-diaryl-1H-pyrazol-4-yl)hydantoin, 5-[3-(4-fluorophenyl)-1-phenyl-1H-pyrazol-4-yl]-2,4-imidazolidinedione (DPH). Inhibited by ABI1, whose activity is controlled by ABL1 itself through tyrosine phosphorylation. Also inhibited by imatinib mesylate (Gleevec) which is used for the treatment of chronic myeloid leukemia (CML), and by VX-680, an inhibitor that also acts on imatinib-resistant mutants. Non-receptor tyrosine-protein kinase that plays a role in many key processes linked to cell growth and survival such as cytoskeleton remodeling in response to extracellular stimuli, cell motility and adhesion, receptor endocytosis, autophagy, DNA damage response and apoptosis. Coordinates actin remodeling through tyrosine phosphorylation of proteins controlling cytoskeleton dynamics like WASF3 (involved in branch formation); ANXA1 (involved in membrane anchoring); DBN1, DBNL, CTTN, RAPH1 and ENAH (involved in signaling); or MAPT and PXN (microtubule-binding proteins). Phosphorylation of WASF3 is critical for the stimulation of lamellipodia formation and cell migration. Involved in the regulation of cell adhesion and motility through phosphorylation of key regulators of these processes such as BCAR1, CRK, CRKL, DOK1, EFS or NEDD9. Phosphorylates multiple receptor tyrosine kinases and more particularly promotes endocytosis of EGFR, facilitates the formation of neuromuscular synapses through MUSK, inhibits PDGFRB-mediated chemotaxis and modulates the endocytosis of activated B-cell receptor complexes. Other substrates which are involved in endocytosis regulation are the caveolin (CAV1) and RIN1. Moreover, ABL1 regulates the CBL family of ubiquitin ligases that drive receptor down-regulation and actin remodeling. Phosphorylation of CBL leads to increased EGFR stability. Involved in late-stage autophagy by regulating positively the trafficking and function of lysosomal components. ABL1 targets to mitochondria in response to oxidative stress and thereby mediates mitochondrial dysfunction and cell death. In response to oxidative stress, phosphorylates serine/threonine kinase PRKD2 at 'Tyr-717'. ABL1 is also translocated in the nucleus where it has DNA-binding activity and is involved in DNA-damage response and apoptosis. Many substrates are known mediators of DNA repair: DDB1, DDB2, ERCC3, ERCC6, RAD9A, RAD51, RAD52 or WRN. Activates the proapoptotic pathway when the DNA damage is too severe to be repaired. Phosphorylates TP73, a primary regulator for this type of damage-induced apoptosis. Phosphorylates the caspase CASP9 on 'Tyr-153' and regulates its processing in the apoptotic response to DNA damage. Phosphorylates PSMA7 that leads to an inhibition of proteasomal activity and cell cycle transition blocks. ABL1 also acts as a regulator of multiple pathological signaling cascades during infection. Several known tyrosine-phosphorylated microbial proteins have been identified as ABL1 substrates. This is the case of A36R of Vaccinia virus, Tir (translocated intimin receptor) of pathogenic E.coli and possibly Citrobacter, CagA (cytotoxin-associated gene A) of H.pylori, or AnkA (ankyrin repeat-containing protein A) of A.phagocytophilum. Pathogens can highjack ABL1 kinase signaling to reorganize the host actin cytoskeleton for multiple purposes, like facilitating intracellular movement and host cell exit. Finally, functions as its own regulator through autocatalytic activity as well as through phosphorylation of its inhibitor, ABI1. Regulates T-cell differentiation in a TBX21-dependent manner. Positively regulates chemokine-mediated T-cell migration, polarization, and homing to lymph nodes and immune-challenged tissues, potentially via activation of NEDD9/HEF1 and RAP1. Phosphorylates TBX21 on tyrosine residues leading to an enhancement of its transcriptional activator activity. The sequence is that of Tyrosine-protein kinase ABL1 (ABL1) from Homo sapiens (Human).